Here is a 46-residue protein sequence, read N- to C-terminus: DNA-directed RNA polymerases I, II, and III subunit rpabc4 (46 aa).

4 residues coordinate Zn(2+): Cys-7, Cys-10, Cys-24, and Cys-27. The C4-type zinc-finger motif lies at 7–27 (CGECGAEHEIKPKEPVKCKDC).

The protein belongs to the archaeal Rpo12/eukaryotic RPC10 RNA polymerase subunit family. As to quaternary structure, component of the RNA polymerase I (Pol I), RNA polymerase II (Pol II) and RNA polymerase III (Pol III) complexes consisting of at least 13, 12 and 17 subunits, respectively.

It localises to the nucleus. In terms of biological role, DNA-dependent RNA polymerase catalyzes the transcription of DNA into RNA using the four ribonucleoside triphosphates as substrates. Common component of RNA polymerases I, II and III which synthesize ribosomal RNA precursors, mRNA precursors and many functional non-coding RNAs, and a small RNAs, such as 5S rRNA and tRNAs, respectively. This chain is DNA-directed RNA polymerases I, II, and III subunit rpabc4 (polr2k), found in Dictyostelium discoideum (Social amoeba).